A 342-amino-acid chain; its full sequence is 4-hydroxy-2-oxovalerate aldolase 2 (342 aa).

The Pyruvate carboxyltransferase domain maps to 8-260 (ITVHDMTLRD…ETGVDVFKIQ (253 aa)). Substrate is bound at residue 16–17 (RD). Asp17 provides a ligand contact to Mn(2+). His20 acts as the Proton acceptor in catalysis. Residues Ser170 and His199 each contribute to the substrate site. Positions 199 and 201 each coordinate Mn(2+). Tyr290 is a substrate binding site.

The protein belongs to the 4-hydroxy-2-oxovalerate aldolase family.

The catalysed reaction is (S)-4-hydroxy-2-oxopentanoate = acetaldehyde + pyruvate. The chain is 4-hydroxy-2-oxovalerate aldolase 2 (mhpE) from Azoarcus sp. (strain BH72).